A 176-amino-acid polypeptide reads, in one-letter code: UBA-like domain-containing protein 1 (176 aa).

The tract at residues Ser-87–Arg-176 is disordered. The segment covering Thr-120–Gln-137 has biased composition (low complexity). A compositionally biased stretch (pro residues) spans Pro-138–Pro-150. Basic and acidic residues predominate over residues Pro-166–Arg-176.

Belongs to the UBALD family.

The chain is UBA-like domain-containing protein 1 (Ubald1) from Mus musculus (Mouse).